We begin with the raw amino-acid sequence, 653 residues long: 23S rRNA 5-hydroxycytidine C2501 synthase (653 aa).

The protein belongs to the peptidase U32 family. Interacts with precursors of the 50S ribosomal subunit.

With respect to regulation, iron-sulfur clusters and prephenate are required for ho5C2501 formation. Functionally, responsible for the formation of the 5-hydroxycytidine modification at the C2501 position (ho5C2501) of 23S rRNA. May be a Fe-S protein that catalyzes ho5C2501 formation using prephenate as a hydroxyl group donor. This Escherichia coli (strain K12) protein is 23S rRNA 5-hydroxycytidine C2501 synthase.